A 610-amino-acid chain; its full sequence is Phragmoplastin DRP1A (610 aa).

M1 is modified (N-acetylmethionine). Positions 31 to 300 constitute a Dynamin-type G domain; that stretch reads WDSLPAIAVV…LERVIKSRIP (270 aa). Positions 41-48 are G1 motif; the sequence is GGQSSGKS. 44-49 provides a ligand contact to GTP; the sequence is SSGKSS. The interval 67 to 69 is G2 motif; sequence VTR. The tract at residues 142-145 is G3 motif; it reads DLPG. Residues 211–214 are G4 motif; it reads TKID. GTP-binding positions include 212 to 217 and 242 to 245; these read KIDLMD and NRSQ. Residues 241–244 are G5 motif; that stretch reads VNRS. The region spanning 518-610 is the GED domain; it reads LRRIGSNVLS…SEIDAVAWSK (93 aa).

Belongs to the TRAFAC class dynamin-like GTPase superfamily. Dynamin/Fzo/YdjA family. As to quaternary structure, forms homodimer and may homooligomerize and heterooligomerize to form the phragmoplastin complex. Interacts with AGD3/VAN3. May interact with CALS1. Binds to AHK2. Binds to SH3P2. Forms a complex made of SH3P2 and DRP1A and triggers its accumulation at the cell plate. Interacts with DRP2B at the plasma membrane and in forming clathrin-coated vesicles (CCV). Binds to PHIP1. As to expression, ubiquitous. Expressed in leaves (at protein level).

It is found in the cytoplasm. The protein localises to the cytoskeleton. It localises to the phragmoplast. The protein resides in the cell cortex. Its subcellular location is the cytoplasmic vesicle. It is found in the clathrin-coated vesicle. The protein localises to the cell membrane. It carries out the reaction GTP + H2O = GDP + phosphate + H(+). Functionally, microtubule-associated force-producing protein that is targeted to at the leading edges of the forming cell plate during cytokinesis. Also plays a major role in plasma membrane maintenance and cell wall integrity with implications in vesicular trafficking, polar cell expansion, vascular formation, and other aspects of plant growth and development, including stigmatic papillae expansion. Collaboratively with DRP2B, participates in clathrin-coated vesicle formation during endocytosis. Necessary for BOR1 polar localization in low-boron (B) conditions as well as for BOR1 endocytosis and subsequent degradation under high-concentration of boron. Has a GTPase activity. Required for the sterols-dependent dynamic high lipid order observed at the cell plate of dividing cells. Together with SH3P2, converts the fused vesicles to tubular structures at the cell plate and phragmoplasts during cytokinesis. With DRP2B and PIP5K3, required for the precise coordination of polar ARAC3/ROP6 and ARAC4/ROP2 placement and subsequent root hair positioning during planar polarity formation in root hair-forming cells, probably by mediating the correct basal-to-planar polarity switching of D6PK into the polar, lipid-enriched domain. Involved in endocytosis required for cellulose deposition during cell wall formation and elongation. Interacts with plasma membrane-mimetic liposomes and induces their clustering. The polypeptide is Phragmoplastin DRP1A (Arabidopsis thaliana (Mouse-ear cress)).